A 572-amino-acid chain; its full sequence is Flagellin B (572 aa).

It belongs to the bacterial flagellin family. As to quaternary structure, heteromer of flaA and flaB.

It localises to the secreted. The protein localises to the bacterial flagellum. Flagellin is the subunit protein which polymerizes to form the filaments of bacterial flagella. The sequence is that of Flagellin B (flaB) from Campylobacter jejuni subsp. jejuni serotype O:2 (strain ATCC 700819 / NCTC 11168).